The chain runs to 396 residues: E3 ubiquitin-protein transferase MAEA (396 aa).

The interval 1–124 (MAVQESAVQL…AAASVWKRKR (124 aa)) is extracellular and involved in cell to cell contact. Thr28 is subject to Phosphothreonine. The LisH domain occupies 121–153 (KRKRMDRMMVEHLLRCGYYNTAVKLARQSGIED). A CTLH domain is found at 159 to 216 (MFLTAKEVEESLERRETATCLAWCHDNKSRLRKMKSCLEFSLRIQEFIELIRQNKRLD). The segment at 314-381 (CPVCSRSLNK…QDDKVVCPRT (68 aa)) adopts an RING-Gid-type zinc-finger fold.

Identified in the CTLH complex that contains GID4, RANBP9 and/or RANBP10, MKLN1, MAEA, RMND5A (or alternatively its paralog RMND5B), GID8, ARMC8, WDR26 and YPEL5. Within this complex, MAEA, RMND5A (or alternatively its paralog RMND5B), GID8, WDR26, and RANBP9 and/or RANBP10 form the catalytic core, while GID4, MKLN1, ARMC8 and YPEL5 have ancillary roles. Interacts with F-actin. In terms of processing, autoubiquitinated as component of the CTLH E3 ubiquitin-protein ligase complex (in vitro).

The protein localises to the cytoplasm. It is found in the nucleus. It localises to the nucleoplasm. The protein resides in the nucleus matrix. Its subcellular location is the cell membrane. The protein localises to the cytoskeleton. The catalysed reaction is S-ubiquitinyl-[E2 ubiquitin-conjugating enzyme]-L-cysteine + [acceptor protein]-L-lysine = [E2 ubiquitin-conjugating enzyme]-L-cysteine + N(6)-ubiquitinyl-[acceptor protein]-L-lysine.. Core component of the CTLH E3 ubiquitin-protein ligase complex that selectively accepts ubiquitin from UBE2H and mediates ubiquitination and subsequent proteasomal degradation of the transcription factor HBP1. MAEA and RMND5A are both required for catalytic activity of the CTLH E3 ubiquitin-protein ligase complex. MAEA is required for normal cell proliferation. The CTLH E3 ubiquitin-protein ligase complex is not required for the degradation of enzymes involved in gluconeogenesis, such as FBP1. Plays a role in erythroblast enucleation during erythrocyte maturation and in the development of mature macrophages. Mediates the attachment of erythroid cell to mature macrophages; this MAEA-mediated contact inhibits erythroid cell apoptosis. Participates in erythroblastic island formation, which is the functional unit of definitive erythropoiesis. Associates with F-actin to regulate actin distribution in erythroblasts and macrophages. May contribute to nuclear architecture and cells division events. The polypeptide is E3 ubiquitin-protein transferase MAEA (MAEA) (Macaca fascicularis (Crab-eating macaque)).